We begin with the raw amino-acid sequence, 468 residues long: Aldehyde dehydrogenase family 3 member B1 (468 aa).

Residue Met1 is modified to N-acetylmethionine. An NAD(+)-binding site is contributed by 188–193 (GSPRVG). Residues Glu210 and Cys244 contribute to the active site. A lipid anchor (S-palmitoyl cysteine) is attached at Cys463. Residue Cys465 is modified to Cysteine methyl ester. The S-geranylgeranyl cysteine moiety is linked to residue Cys465. A propeptide spans 466–468 (TLL) (removed in mature form).

This sequence belongs to the aldehyde dehydrogenase family. In terms of processing, dually lipidated in the C-terminus; prenylation occurs prior to, and is a prerequisite for palmitoylation. It is also required for activity towards long-chain substrates. In terms of tissue distribution, highest expression in kidney and lung.

The protein localises to the cell membrane. It catalyses the reaction an aldehyde + NADP(+) + H2O = a carboxylate + NADPH + 2 H(+). The enzyme catalyses an aldehyde + NAD(+) + H2O = a carboxylate + NADH + 2 H(+). The catalysed reaction is a long-chain fatty aldehyde + NAD(+) + H2O = a long-chain fatty acid + NADH + 2 H(+). It carries out the reaction a medium-chain fatty aldehyde + NAD(+) + H2O = a medium-chain fatty acid + NADH + 2 H(+). It catalyses the reaction octanal + NAD(+) + H2O = octanoate + NADH + 2 H(+). The enzyme catalyses nonanal + NAD(+) + H2O = nonanoate + NADH + 2 H(+). The catalysed reaction is hexadecanoate + NADH + 2 H(+) = hexadecanal + NAD(+) + H2O. It carries out the reaction (2E)-octenal + NAD(+) + H2O = (2E)-octenoate + NADH + 2 H(+). It catalyses the reaction (E)-non-2-enal + NAD(+) + H2O = (E)-non-2-enoate + NADH + 2 H(+). The enzyme catalyses (E)-4-hydroxynon-2-enal + NAD(+) + H2O = (E)-4-hydroxynon-2-enoate + NADH + 2 H(+). The catalysed reaction is (2E)-hexadecenal + NAD(+) + H2O = (E)-hexadec-2-enoate + NADH + 2 H(+). It carries out the reaction benzaldehyde + NAD(+) + H2O = benzoate + NADH + 2 H(+). It catalyses the reaction a medium-chain fatty aldehyde + NADP(+) + H2O = a medium-chain fatty acid + NADPH + 2 H(+). The enzyme catalyses hexanal + NADP(+) + H2O = hexanoate + NADPH + 2 H(+). The catalysed reaction is octanal + NADP(+) + H2O = octanoate + NADPH + 2 H(+). It carries out the reaction nonanal + NADP(+) + H2O = nonanoate + NADPH + 2 H(+). It catalyses the reaction (2E)-octenal + NADP(+) + H2O = (2E)-octenoate + NADPH + 2 H(+). The enzyme catalyses (E)-non-2-enal + NADP(+) + H2O = (E)-non-2-enoate + NADPH + 2 H(+). The catalysed reaction is (E)-4-hydroxynon-2-enal + NADP(+) + H2O = (E)-4-hydroxynon-2-enoate + NADPH + 2 H(+). It carries out the reaction benzaldehyde + NADP(+) + H2O = benzoate + NADPH + 2 H(+). It functions in the pathway alcohol metabolism; ethanol degradation; acetate from ethanol: step 2/2. Oxidizes medium and long chain saturated and unsaturated fatty aldehydes generated in the plasma membrane into non-toxic fatty acids. May have a protective role against the cytotoxicity induced by lipid peroxidation. Short-chain fatty aldehydes are not good substrates. Can use both NADP(+) and NAD(+) as electron acceptor in vitro, however in vivo preference will depend on their tissue levels. Low activity towards acetaldehyde and 3,4-dihydroxyphenylacetaldehyde. Able to metabolize aromatic aldehydes such as benzaldehyde to their acid form. In Homo sapiens (Human), this protein is Aldehyde dehydrogenase family 3 member B1 (ALDH3B1).